The chain runs to 180 residues: NADH-quinone oxidoreductase subunit I (180 aa).

4Fe-4S ferredoxin-type domains are found at residues 50 to 80 (LTRD…LQKA) and 90 to 119 (EFFR…MTPD). Residues C60, C63, C66, C70, C99, C102, C105, and C109 each contribute to the [4Fe-4S] cluster site.

The protein belongs to the complex I 23 kDa subunit family. In terms of assembly, NDH-1 is composed of 14 different subunits. Subunits NuoA, H, J, K, L, M, N constitute the membrane sector of the complex. [4Fe-4S] cluster serves as cofactor.

The protein resides in the cell inner membrane. The catalysed reaction is a quinone + NADH + 5 H(+)(in) = a quinol + NAD(+) + 4 H(+)(out). Its function is as follows. NDH-1 shuttles electrons from NADH, via FMN and iron-sulfur (Fe-S) centers, to quinones in the respiratory chain. The immediate electron acceptor for the enzyme in this species is believed to be ubiquinone. Couples the redox reaction to proton translocation (for every two electrons transferred, four hydrogen ions are translocated across the cytoplasmic membrane), and thus conserves the redox energy in a proton gradient. In Acinetobacter baylyi (strain ATCC 33305 / BD413 / ADP1), this protein is NADH-quinone oxidoreductase subunit I.